The following is a 270-amino-acid chain: Formamidopyrimidine-DNA glycosylase (270 aa).

Catalysis depends on proline 2, which acts as the Schiff-base intermediate with DNA. The Proton donor role is filled by glutamate 3. The Proton donor; for beta-elimination activity role is filled by lysine 58. Residues histidine 91, arginine 110, and arginine 151 each contribute to the DNA site. An FPG-type zinc finger spans residues 236-270; sequence AVYGREGEPCTHCGAPLQGVRIGGRATIYCSQCQR. The active-site Proton donor; for delta-elimination activity is the arginine 260.

This sequence belongs to the FPG family. Monomer. Requires Zn(2+) as cofactor.

The enzyme catalyses Hydrolysis of DNA containing ring-opened 7-methylguanine residues, releasing 2,6-diamino-4-hydroxy-5-(N-methyl)formamidopyrimidine.. It carries out the reaction 2'-deoxyribonucleotide-(2'-deoxyribose 5'-phosphate)-2'-deoxyribonucleotide-DNA = a 3'-end 2'-deoxyribonucleotide-(2,3-dehydro-2,3-deoxyribose 5'-phosphate)-DNA + a 5'-end 5'-phospho-2'-deoxyribonucleoside-DNA + H(+). Functionally, involved in base excision repair of DNA damaged by oxidation or by mutagenic agents. Acts as a DNA glycosylase that recognizes and removes damaged bases. Has a preference for oxidized purines, such as 7,8-dihydro-8-oxoguanine (8-oxoG). Has AP (apurinic/apyrimidinic) lyase activity and introduces nicks in the DNA strand. Cleaves the DNA backbone by beta-delta elimination to generate a single-strand break at the site of the removed base with both 3'- and 5'-phosphates. The sequence is that of Formamidopyrimidine-DNA glycosylase from Acidithiobacillus ferrooxidans (strain ATCC 23270 / DSM 14882 / CIP 104768 / NCIMB 8455) (Ferrobacillus ferrooxidans (strain ATCC 23270)).